The chain runs to 317 residues: Ribosomal RNA small subunit methyltransferase H (317 aa).

S-adenosyl-L-methionine-binding positions include 32-34, aspartate 51, phenylalanine 78, aspartate 99, and glutamine 106; that span reads GGH.

It belongs to the methyltransferase superfamily. RsmH family.

The protein localises to the cytoplasm. It carries out the reaction cytidine(1402) in 16S rRNA + S-adenosyl-L-methionine = N(4)-methylcytidine(1402) in 16S rRNA + S-adenosyl-L-homocysteine + H(+). Its function is as follows. Specifically methylates the N4 position of cytidine in position 1402 (C1402) of 16S rRNA. The sequence is that of Ribosomal RNA small subunit methyltransferase H from Helicobacter hepaticus (strain ATCC 51449 / 3B1).